The primary structure comprises 124 residues: Large ribosomal subunit protein bL12 (124 aa).

The protein belongs to the bacterial ribosomal protein bL12 family. Homodimer. Part of the ribosomal stalk of the 50S ribosomal subunit. Forms a multimeric L10(L12)X complex, where L10 forms an elongated spine to which 2 to 4 L12 dimers bind in a sequential fashion. Binds GTP-bound translation factors.

Functionally, forms part of the ribosomal stalk which helps the ribosome interact with GTP-bound translation factors. Is thus essential for accurate translation. The polypeptide is Large ribosomal subunit protein bL12 (Burkholderia cenocepacia (strain HI2424)).